The following is a 357-amino-acid chain: 3-isopropylmalate dehydrogenase (357 aa).

76–89 is a binding site for NAD(+); that stretch reads GPQWDTIDPALRPE. Positions 96, 106, 134, and 224 each coordinate substrate. Positions 224, 248, and 252 each coordinate Mg(2+). 282-294 serves as a coordination point for NAD(+); the sequence is GSAPDIAGKGIAN.

This sequence belongs to the isocitrate and isopropylmalate dehydrogenases family. LeuB type 1 subfamily. In terms of assembly, homodimer. Requires Mg(2+) as cofactor. Mn(2+) serves as cofactor.

Its subcellular location is the cytoplasm. The catalysed reaction is (2R,3S)-3-isopropylmalate + NAD(+) = 4-methyl-2-oxopentanoate + CO2 + NADH. Its pathway is amino-acid biosynthesis; L-leucine biosynthesis; L-leucine from 3-methyl-2-oxobutanoate: step 3/4. Its function is as follows. Catalyzes the oxidation of 3-carboxy-2-hydroxy-4-methylpentanoate (3-isopropylmalate) to 3-carboxy-4-methyl-2-oxopentanoate. The product decarboxylates to 4-methyl-2 oxopentanoate. The sequence is that of 3-isopropylmalate dehydrogenase from Xanthomonas axonopodis pv. citri (strain 306).